Reading from the N-terminus, the 445-residue chain is Phosphoglucosamine mutase (445 aa).

The active-site Phosphoserine intermediate is Ser-102. The Mg(2+) site is built by Ser-102, Asp-241, Asp-243, and Asp-245. The residue at position 102 (Ser-102) is a Phosphoserine.

This sequence belongs to the phosphohexose mutase family. Requires Mg(2+) as cofactor. In terms of processing, activated by phosphorylation.

The catalysed reaction is alpha-D-glucosamine 1-phosphate = D-glucosamine 6-phosphate. Its function is as follows. Catalyzes the conversion of glucosamine-6-phosphate to glucosamine-1-phosphate. The chain is Phosphoglucosamine mutase from Proteus mirabilis (strain HI4320).